A 408-amino-acid chain; its full sequence is Na(+)/H(+) antiporter NhaA (408 aa).

12 helical membrane-spanning segments follow: residues 42 to 62 (LMFVAALALLLANSPFAPVYF), 69 to 89 (VLGLTVLHWINDALMAVFFLL), 110 to 130 (ALPGIAALGGMVVPAVIFIAV), 140 to 160 (GWAIPSATDIAFALGVLSLLG), 169 to 189 (IFLTALAILDDLGAVLIIALF), 192 to 212 (AELTPLMLILAAATLLGLAAL), 215 to 235 (FGVKPLAPYLVLGVVLWFFVL), 238 to 258 (GIHATLAGVALALAIPLQAST), 277 to 297 (VAFLIVPVFGFANAGVSFAGL), 312 to 332 (LGLFFGKQVGVFGFAWLAIWL), 346 to 366 (LYGVAVLCGIGFTMSLFIGLL), and 380 to 400 (IGVLLGSTLAGLIGWLILRVT).

This sequence belongs to the NhaA Na(+)/H(+) (TC 2.A.33) antiporter family.

It is found in the cell inner membrane. It carries out the reaction Na(+)(in) + 2 H(+)(out) = Na(+)(out) + 2 H(+)(in). In terms of biological role, na(+)/H(+) antiporter that extrudes sodium in exchange for external protons. In Nitrobacter hamburgensis (strain DSM 10229 / NCIMB 13809 / X14), this protein is Na(+)/H(+) antiporter NhaA.